The following is a 183-amino-acid chain: Phosphinothricin N-acetyltransferase (183 aa).

In terms of domain architecture, N-acetyltransferase spans 8–169; the sequence is VEIRPATAAD…DVGFWQRDFE (162 aa). Acetyl-CoA is bound by residues 91–93, 99–104, and asparagine 130; these read VYV and RLGLGS.

This sequence belongs to the acetyltransferase family. PAT/BAR subfamily.

The enzyme catalyses phosphinothricin + acetyl-CoA = N-acetylphosphinothricin + CoA + H(+). Inactivates phosphinothricin (PPT) by transfer of an acetyl group from acetyl CoA. This enzyme is an effector of phosphinothricin tripeptide (PTT or bialaphos) resistance. The polypeptide is Phosphinothricin N-acetyltransferase (Streptomyces viridochromogenes (strain DSM 40736 / JCM 4977 / BCRC 1201 / Tue 494)).